The following is a 663-amino-acid chain: Heparan-alpha-glucosaminide N-acetyltransferase (663 aa).

Positions 1–24 (MTGARASAAEQRRAGRSGQARAAE) are disordered. Topologically, residues 1–190 (MTGARASAAE…LAVNEDPVDS (190 aa)) are lumenal, vesicle. N-linked (GlcNAc...) asparagine glycosylation is found at Asn94, Asn142, and Asn162. A disulfide bond links Cys151 and Cys462. The helical transmembrane segment at 191 to 211 (NLPVSIAFLIGLAVIIVISFL) threads the bilayer. The Cytoplasmic segment spans residues 212 to 275 (RLLLSLDDFN…PRLRSVDTFR (64 aa)). Phosphoserine is present on residues Ser243 and Ser245. The helical transmembrane segment at 276–296 (GIALILMVFVNYGGGKYWYFK) threads the bilayer. The active site involves His297. The Lumenal, vesicle segment spans residues 297–302 (HASWNG). Residues 303–323 (LTVADLVFPWFVFIMGSSIFL) form a helical membrane-spanning segment. The Cytoplasmic segment spans residues 324–345 (SMTSILQRGCSKFRLLGKIAWR). Residues 346-366 (SFLLICIGIIIVNPNYCLGPL) traverse the membrane as a helical segment. Residues 367-374 (SWDKVRIP) are Lumenal, vesicle-facing. A helical transmembrane segment spans residues 375–395 (GVLQRLGVTYFVVAVLELLFA). Over 396–420 (KPVPEHCASERSCLSLRDITSSWPQ) the chain is Cytoplasmic. The helical transmembrane segment at 421-441 (WLLILVLEGLWLGLTFLLPVP) threads the bilayer. Residues 442–500 (GCPTGYLGPGGIGDFGKYPNCTGGAAGYIDRLLLGDDHLYQHPSSAVLYHTEVAYDPEG) lie on the Lumenal, vesicle side of the membrane. A helical membrane pass occupies residues 501-521 (ILGTINSIVMAFLGVQAGKIL). Over 522 to 529 (LYYKARTK) the chain is Cytoplasmic. The helical transmembrane segment at 530-550 (DILIRFTAWCCILGLISVALT) threads the bilayer. The Lumenal, vesicle segment spans residues 551–564 (KVSENEGFIPVNKN). The chain crosses the membrane as a helical span at residues 565-585 (LWSLSYVTTLSSFAFFILLVL). Over 586–592 (YPVVDVK) the chain is Cytoplasmic. The helical transmembrane segment at 593-613 (GLWTGTPFFYPGMNSILVYVG) threads the bilayer. Topologically, residues 614 to 634 (HEVFENYFPFQWKLKDNQSHK) are lumenal, vesicle. The segment at 624-635 (QWKLKDNQSHKE) is lysosomal targeting region. Residues 635–655 (EHLTQNIVATALWVLIAYILY) form a helical membrane-spanning segment. The Cytoplasmic segment spans residues 656 to 663 (RKKIFWKI).

In terms of assembly, homooligomer. Homooligomerization is necessary for enzyme activity. Undergoes intralysosomal proteolytic cleavage; occurs within the end of the first and/or the beginning of the second luminal domain and is essential for the activation of the enzyme. In terms of processing, glycosylated. Widely expressed, with highest level in leukocytes, heart, liver, skeletal muscle, lung, placenta and liver.

Its subcellular location is the lysosome membrane. The catalysed reaction is alpha-D-glucosaminyl-[heparan sulfate](n) + acetyl-CoA = N-acetyl-alpha-D-glucosaminyl-[heparan sulfate](n) + CoA + H(+). Its function is as follows. Lysosomal acetyltransferase that acetylates the non-reducing terminal alpha-glucosamine residue of intralysosomal heparin or heparan sulfate, converting it into a substrate for luminal alpha-N-acetyl glucosaminidase. The polypeptide is Heparan-alpha-glucosaminide N-acetyltransferase (HGSNAT) (Homo sapiens (Human)).